The sequence spans 353 residues: MAVKGDDVKWKGIPMKYIALVLLTVQNSALILTLNYSRIMPGYDDKRYFTSTAVLLNELIKLVVCFSVGYHQFRKNVGKEAKLRAFLPQIFGGDSWKLAIPAFLYTCQNNLQYVAAGNLTAASFQVTYQLKILTTAIFSILLLHRRLGPMKWFSLFLLTGGIAIVQLQNLNSDDQMSAGPMNPVTGFSAVLVACLISGLAGVYFEKVLKDTNPSLWVRNVQLSFFSLFPCLFTILMKDYHNIAENGFFFGYNSIVWLAILLQAGGGIIVALCVAFADNIMKNFSTSISIIISSLASVYLMDFKISLTFLIGVMLVIAATFLYTKPESKPSPSRGTYIPMTTQDAAAKDVDHKH.

The next 6 membrane-spanning stretches (helical) occupy residues 147–167 (LGPMKWFSLFLLTGGIAIVQL), 184–204 (VTGFSAVLVACLISGLAGVYF), 215–235 (LWVRNVQLSFFSLFPCLFTIL), 254–274 (IVWLAILLQAGGGIIVALCVA), 279–299 (IMKNFSTSISIIISSLASVYL), and 302–322 (FKISLTFLIGVMLVIAATFLY). Residues 325 to 353 (PESKPSPSRGTYIPMTTQDAAAKDVDHKH) form a disordered region. The segment covering 329–343 (PSPSRGTYIPMTTQD) has biased composition (polar residues).

It belongs to the nucleotide-sugar transporter family. SLC35A subfamily.

The protein localises to the golgi apparatus membrane. Functionally, essential for the transport of UDP-galactose into the lumen of Golgi apparatus. The chain is UDP-galactose transporter (gms1) from Schizosaccharomyces pombe (strain 972 / ATCC 24843) (Fission yeast).